A 235-amino-acid chain; its full sequence is Phosphoribosylaminoimidazole-succinocarboxamide synthase (235 aa).

This sequence belongs to the SAICAR synthetase family.

The catalysed reaction is 5-amino-1-(5-phospho-D-ribosyl)imidazole-4-carboxylate + L-aspartate + ATP = (2S)-2-[5-amino-1-(5-phospho-beta-D-ribosyl)imidazole-4-carboxamido]succinate + ADP + phosphate + 2 H(+). The protein operates within purine metabolism; IMP biosynthesis via de novo pathway; 5-amino-1-(5-phospho-D-ribosyl)imidazole-4-carboxamide from 5-amino-1-(5-phospho-D-ribosyl)imidazole-4-carboxylate: step 1/2. The polypeptide is Phosphoribosylaminoimidazole-succinocarboxamide synthase (Clostridium acetobutylicum (strain ATCC 824 / DSM 792 / JCM 1419 / IAM 19013 / LMG 5710 / NBRC 13948 / NRRL B-527 / VKM B-1787 / 2291 / W)).